The following is a 465-amino-acid chain: Sodium-coupled neutral amino acid transporter 7 (465 aa).

A run of 11 helical transmembrane segments spans residues 54–74 (AVFI…PAAF), 82–102 (AGVT…VILA), 128–148 (ICEL…LIII), 177–197 (FTIT…KEIG), 204–224 (TLSV…YIWP), 244–264 (FNAM…VPVF), 275–295 (WWGV…GTGV), 318–338 (VAVA…YPIL), 370–390 (ILQT…IPDI), 394–414 (ISLI…LCLI), and 427–447 (SWNA…FIFG).

It belongs to the amino acid/polyamine transporter 2 family.

The protein resides in the lysosome membrane. It is found in the cell projection. Its subcellular location is the axon. The catalysed reaction is L-asparagine(in) + Na(+)(in) = L-asparagine(out) + Na(+)(out). The enzyme catalyses L-glutamine(in) + Na(+)(in) = L-glutamine(out) + Na(+)(out). Its function is as follows. Symporter that selectively cotransports sodium ions and amino acids, such as L-glutamine and L-asparagine from the lysosome into the cytoplasm and may participates in mTORC1 activation. The transport activity requires an acidic lysosomal lumen. The polypeptide is Sodium-coupled neutral amino acid transporter 7 (Danio rerio (Zebrafish)).